A 325-amino-acid chain; its full sequence is LIM and senescent cell antigen-like-containing domain protein 1 (325 aa).

N-acetylalanine is present on alanine 2. LIM zinc-binding domains lie at 10 to 62, 71 to 121, 135 to 184, 193 to 243, and 252 to 303; these read CERC…CEHD, CHQC…CRPC, CQKC…CLPC, CGAC…CETH, and CFHC…CKKC.

Component of the heterotrimeric IPP (ILK-PINCH-PARVIN) complex composed of ILK, LIMS1/PINCH and PARVA; the complex binds to F-actin via the C-terminal tail of LIMS1 and the N-terminal region of PARVA, promoting F-actin filament bundling. Formation of the IPP complex is dependent on protein kinase C and precedes integrin-mediated cell adhesion and spreading. Competes with LIMS2 for interaction with ILK. Interacts with SH3/SH2 adapter NCK2, thereby linking the complex to cell surface receptors. Interacts (via LIM zinc-binding 5) with TGFB1I1.

The protein resides in the cell junction. It localises to the focal adhesion. The protein localises to the cell membrane. Its function is as follows. Within the IPP (ILK-PINCH-PARVIN) complex, binds to F-actin, promoting F-actin bundling, a process required to generate force for actin cytoskeleton reorganization and subsequent dynamic cell adhesion events such as cell spreading and migration. The chain is LIM and senescent cell antigen-like-containing domain protein 1 (Lims1) from Mus musculus (Mouse).